We begin with the raw amino-acid sequence, 355 residues long: MNTTPVHALTDIDGGIAVDPAPRLAGPPVFGGPGNDAFDLAPVRSTGREMLRFDFPGVSIGAAHYEEGPTGATVIHIPAGARTAVDARGGAVGLSGGYDFNHAICLAGGASYGLEAGAGVSGALLERLEYRTGFAEAQLVSSAVIYDFSARSTAVYPDKALGRAALEFAVPGEFPQGRAGAGMSASAGKVDWDRTEITGQGAAFRRLGDVRILAVVVPNPVGVIMDRAGTVVRGNYDAQTGVRRHPVFDYQEAFAEQVPPVTEAGNTTISAIVTNVRMSPVELNQFAKQVHSSMHRGIQPFHTDMDGDTLFAVTTDEIDLPTTPGSSRGRLSVNATALGAIASEVMWDAVLEAGK.

Residue Thr-267 is the Nucleophile of the active site.

This sequence belongs to the peptidase S58 family. In terms of assembly, heterotetramer composed of 4 alpha/beta heterodimers. Expressed as an inactive precursor that is cleaved autocatalytically at Asn266/Thr267 to generate an active enzyme composed of an alpha subunit and a beta subunit.

The catalysed reaction is [N-(6-aminohexanoyl)]n + H2O = [N-(6-aminohexanoyl)]n-x + [N-(6-aminohexanoyl)]x.. Its pathway is xenobiotic degradation; nylon-6 oligomer degradation. Its function is as follows. Involved in the degradation of nylon-6 oligomers. Degrades cyclic and linear oligomers of 6-aminohexanoate (Ahx) with a degree of polymerization greater than three by an endo-type mode. Cannot use Ahx cyclic dimer or the Ahx linear dimer. This is 6-aminohexanoate-oligomer endohydrolase from Agromyces sp. (strain KY5R).